The sequence spans 189 residues: Coatomer subunit zeta (189 aa).

It belongs to the adaptor complexes small subunit family. As to quaternary structure, oligomeric complex that consists of at least the alpha, beta, beta', gamma, delta, epsilon and zeta subunits.

The protein localises to the cytoplasm. Its subcellular location is the golgi apparatus membrane. It is found in the cytoplasmic vesicle. The protein resides in the COPI-coated vesicle membrane. The coatomer is a cytosolic protein complex that binds to dilysine motifs and reversibly associates with Golgi non-clathrin-coated vesicles, which further mediate biosynthetic protein transport from the ER, via the Golgi up to the trans Golgi network. Coatomer complex is required for budding from Golgi membranes, and is essential for the retrograde Golgi-to-ER transport of dilysine-tagged proteins. The zeta subunit may be involved in regulating the coat assembly and, hence, the rate of biosynthetic protein transport due to its association-dissociation properties with the coatomer complex. The polypeptide is Coatomer subunit zeta (RET3) (Saccharomyces cerevisiae (strain ATCC 204508 / S288c) (Baker's yeast)).